Consider the following 302-residue polypeptide: 33 kDa chaperonin (302 aa).

Cystine bridges form between Cys-255–Cys-257 and Cys-288–Cys-291.

This sequence belongs to the HSP33 family. In terms of processing, under oxidizing conditions two disulfide bonds are formed involving the reactive cysteines. Under reducing conditions zinc is bound to the reactive cysteines and the protein is inactive.

The protein localises to the cytoplasm. In terms of biological role, redox regulated molecular chaperone. Protects both thermally unfolding and oxidatively damaged proteins from irreversible aggregation. Plays an important role in the bacterial defense system toward oxidative stress. The chain is 33 kDa chaperonin from Caulobacter vibrioides (strain ATCC 19089 / CIP 103742 / CB 15) (Caulobacter crescentus).